The primary structure comprises 146 residues: Transcriptional regulator MraZ (146 aa).

2 consecutive SpoVT-AbrB domains span residues 5–48 and 77–120; these read TSYH…TLEE and ASEC…SRAK.

The protein belongs to the MraZ family. As to quaternary structure, forms oligomers.

It localises to the cytoplasm. It is found in the nucleoid. The polypeptide is Transcriptional regulator MraZ (Desulfosudis oleivorans (strain DSM 6200 / JCM 39069 / Hxd3) (Desulfococcus oleovorans)).